Here is a 1444-residue protein sequence, read N- to C-terminus: RNA-directed RNA polymerase P1 (1444 aa).

The disordered stretch occupies residues 156–182 (SEEIQMDESQSDKRRRKKRMEKSRPVW). Residues 690–897 (LGVGFATLYQ…KTVISHISGE (208 aa)) enclose the RdRp catalytic domain.

This sequence belongs to the reoviridae RNA-directed RNA polymerase family.

The protein localises to the virion. The protein resides in the host cytoplasm. It carries out the reaction RNA(n) + a ribonucleoside 5'-triphosphate = RNA(n+1) + diphosphate. Its function is as follows. RNA-directed RNA polymerase that is involved in both transcription and genome replication. Together with the capping enzyme P5 and protein P7, forms an enzyme complex positioned near the channels situated at each of the five-fold vertices of the core. This chain is RNA-directed RNA polymerase P1 (S1), found in Rice dwarf virus (isolate Fujian) (RDV).